We begin with the raw amino-acid sequence, 154 residues long: Myoglobin (154 aa).

The Globin domain maps to 2 to 148 (GLSEAEWQLV…FRKDIAAKYK (147 aa)). Residue Ser4 is modified to Phosphoserine. Position 65 (His65) interacts with nitrite. His65 lines the O2 pocket. At Thr68 the chain carries Phosphothreonine. His94 is a binding site for heme b.

Belongs to the globin family. As to quaternary structure, monomeric.

It localises to the cytoplasm. It is found in the sarcoplasm. It carries out the reaction Fe(III)-heme b-[protein] + nitric oxide + H2O = Fe(II)-heme b-[protein] + nitrite + 2 H(+). The catalysed reaction is H2O2 + AH2 = A + 2 H2O. Its function is as follows. Monomeric heme protein which primary function is to store oxygen and facilitate its diffusion within muscle tissues. Reversibly binds oxygen through a pentacoordinated heme iron and enables its timely and efficient release as needed during periods of heightened demand. Depending on the oxidative conditions of tissues and cells, and in addition to its ability to bind oxygen, it also has a nitrite reductase activity whereby it regulates the production of bioactive nitric oxide. Under stress conditions, like hypoxia and anoxia, it also protects cells against reactive oxygen species thanks to its pseudoperoxidase activity. The chain is Myoglobin (MB) from Indopacetus pacificus (Longman's beaked whale).